Reading from the N-terminus, the 942-residue chain is Homeobox protein 2 (942 aa).

2 stretches are compositionally biased toward low complexity: residues 32 to 87 (ECNE…NINE) and 98 to 130 (SPYS…SPIP). Disordered stretches follow at residues 32 to 149 (ECNE…PQNI), 161 to 494 (LESP…RLKK), 537 to 580 (RQEK…QGGA), and 609 to 942 (FKNN…CQQN). Residues 131-149 (NTNFKQSGEYQSIPSPQNI) show a composition bias toward polar residues. Residues 163 to 261 (SPNSSNSSPS…PSSNLSKSNS (99 aa)) are compositionally biased toward low complexity. A compositionally biased stretch (polar residues) spans 269–290 (QAPSNTSSPQLLSPNHNQQRIS). Low complexity-rich tracts occupy residues 299–430 (NNNH…NSSP) and 450–464 (NNNN…SNSS). Over residues 465-481 (FDEYQPQQKVSRSNSPN) the composition is skewed to polar residues. The homeobox DNA-binding region spans 485–544 (EKKRRTRLKKEQADILKTFFDNDDYPTKDDKETLANRLGMSYCAVTTWFSNKRQEKKRRG). Composition is skewed to low complexity over residues 609–621 (FKNN…NKNV), 628–685 (NNNN…GSSD), 694–737 (NNNN…NNNN), 752–764 (NNNN…NNNN), 776–864 (SDDT…YLNN), and 890–927 (NNFN…NDNN). Residues 835–865 (NNNNNNNNQNNNNNNNNNQYNNNNKNYLNNI) are a coiled coil.

It localises to the nucleus. Putative transcription factor that may potentiate the function of warA. This is Homeobox protein 2 (hbx2) from Dictyostelium discoideum (Social amoeba).